Reading from the N-terminus, the 460-residue chain is N-myc proto-oncogene protein (460 aa).

Positions 19-47 (LEFDSLQPCFYPDEDDFYFGGPDSTPPGE) are interaction with AURKA. Residues 61–90 (LSPSRAFSEQSPEPSDWATEMLLPEADLWG) form an interaction with AURKA and FBXW7 region. The 9aaTAD motif lies at 76–85 (DWATEMLLPE). Disordered regions lie at residues 131–169 (VSEK…GAGR), 221–288 (AAAP…SNSK), and 330–388 (APSP…LERQ). Residues 138–158 (GRGPPAAGPATPGAGAANPAG) show a composition bias toward low complexity. A compositionally biased stretch (gly residues) spans 159–169 (RGHGGTAGAGR). Low complexity predominate over residues 221 to 233 (AAAPASAAVAAPP). The segment covering 255–274 (TLSDSDDEDDEEEDEEEEID) has biased composition (acidic residues). Phosphoserine; by CK2 occurs at positions 257 and 259. The bHLH domain maps to 377-429 (ERRRNHNILERQRRNDLRSSFLTLRDHVPELVKNEKAAKVVILKKATEYVHSL). The segment at 429-450 (LQAEEHQLLLEKEKLQARQQQL) is leucine-zipper.

Efficient DNA binding requires dimerization with another bHLH protein. Binds DNA as a heterodimer with MAX. Interacts with KDM5A, KDM5B and HUWE1. Interacts with MYCNOS. Interacts with AURKA; interaction is phospho-independent and triggers AURKA activation; AURKA competes with FBXW7 for binding to unphosphorylated MYCN but not for binding to unphosphorylated MYCN. Interacts with FBXW7; FBXW7 competes with AURKA for binding to unphosphorylated MYCN but not for binding to phosphorylated MYCN. Phosphorylated by GSK3-beta which may promote its degradation. Phosphorylated by AURKA.

It localises to the nucleus. Positively regulates the transcription of MYCNOS in neuroblastoma cells. The chain is N-myc proto-oncogene protein (MYCN) from Marmota monax (Woodchuck).